Here is a 574-residue protein sequence, read N- to C-terminus: Eukaryotic translation initiation factor 3 subunit D (574 aa).

The interval 153-178 is disordered; that stretch reads QRRGGNARQGQRGQGGRFGGDRPKER. The span at 154–163 shows a compositional bias: low complexity; sequence RRGGNARQGQ. The interval 312-326 is RNA gate; it reads PVETLTVSETSAEPP. Positions 555-574 are disordered; it reads EGTFDSERESSEEENSDDDQ. Over residues 564-574 the composition is skewed to acidic residues; the sequence is SSEEENSDDDQ.

This sequence belongs to the eIF-3 subunit D family. As to quaternary structure, component of the eukaryotic translation initiation factor 3 (eIF-3) complex.

The protein resides in the cytoplasm. Functionally, mRNA cap-binding component of the eukaryotic translation initiation factor 3 (eIF-3) complex, which is involved in protein synthesis of a specialized repertoire of mRNAs and, together with other initiation factors, stimulates binding of mRNA and methionyl-tRNAi to the 40S ribosome. The eIF-3 complex specifically targets and initiates translation of a subset of mRNAs involved in cell proliferation. In the eIF-3 complex, eif3d specifically recognizes and binds the 7-methylguanosine cap of a subset of mRNAs. In Caenorhabditis briggsae, this protein is Eukaryotic translation initiation factor 3 subunit D.